We begin with the raw amino-acid sequence, 92 residues long: Putative transcription elongation factor S-II-like protein 81R (92 aa).

The TFIIS-type zinc finger occupies 51 to 91 (GTVKCPGCGSRRVHALQRQTRSADEPMTLFAMCSECGKRWT). Zn(2+) contacts are provided by Cys-55, Cys-58, Cys-83, and Cys-86.

The polypeptide is Putative transcription elongation factor S-II-like protein 81R (Dryophytes versicolor (chameleon treefrog)).